A 654-amino-acid chain; its full sequence is tRNA 5-methylaminomethyl-2-thiouridine biosynthesis bifunctional protein MnmC (654 aa).

The tRNA (mnm(5)s(2)U34)-methyltransferase stretch occupies residues 1–236 (MPTLLQHAQI…KWEVMSGAYV (236 aa)). Residues 262 to 654 (IGAGLAGSSS…FGLRRLIRGK (393 aa)) are FAD-dependent cmnm(5)s(2)U34 oxidoreductase.

It in the N-terminal section; belongs to the methyltransferase superfamily. tRNA (mnm(5)s(2)U34)-methyltransferase family. The protein in the C-terminal section; belongs to the DAO family. FAD serves as cofactor.

It is found in the cytoplasm. It catalyses the reaction 5-aminomethyl-2-thiouridine(34) in tRNA + S-adenosyl-L-methionine = 5-methylaminomethyl-2-thiouridine(34) in tRNA + S-adenosyl-L-homocysteine + H(+). In terms of biological role, catalyzes the last two steps in the biosynthesis of 5-methylaminomethyl-2-thiouridine (mnm(5)s(2)U) at the wobble position (U34) in tRNA. Catalyzes the FAD-dependent demodification of cmnm(5)s(2)U34 to nm(5)s(2)U34, followed by the transfer of a methyl group from S-adenosyl-L-methionine to nm(5)s(2)U34, to form mnm(5)s(2)U34. The polypeptide is tRNA 5-methylaminomethyl-2-thiouridine biosynthesis bifunctional protein MnmC (Pseudomonas putida (strain ATCC 700007 / DSM 6899 / JCM 31910 / BCRC 17059 / LMG 24140 / F1)).